A 562-amino-acid chain; its full sequence is Glucocorticoid modulatory element-binding protein 1 (562 aa).

Residue Ala-2 is modified to N-acetylalanine. An SAND domain is found at 72–156 (ASSIEANEDM…RKMMDSGQID (85 aa)). Zn(2+) is bound at residue Cys-103. DNA-binding residues include Lys-129, Lys-133, Lys-136, and Arg-147. Zn(2+) is bound by residues His-160, Cys-164, and Cys-168. The stretch at 311–357 (LDNRRKQVEHGEEQFLYTLADLERQLEEQKKQAQDPRLKSQTVQNVV) forms a coiled coil. The tract at residues 360–384 (PVSTPKPPKRPRLQRPASTTVLSPS) is disordered. Residues 375–384 (PASTTVLSPS) are compositionally biased toward polar residues.

As to quaternary structure, homodimer, and heterodimer of GMEB1 and GMEB2. Interacts with the glucocorticoid receptor (NR3C1) and NCOA2/TIF2. May interact with HSP27 and CREB-binding protein (CBP). Interacts with TRIM63.

The protein resides in the nucleus. It localises to the cytoplasm. Functionally, trans-acting factor that binds to glucocorticoid modulatory elements (GME) present in the TAT (tyrosine aminotransferase) promoter and increases sensitivity to low concentrations of glucocorticoids. Also binds to the transferrin receptor promoter. The polypeptide is Glucocorticoid modulatory element-binding protein 1 (Gmeb1) (Rattus norvegicus (Rat)).